A 434-amino-acid chain; its full sequence is Beta-enolase (434 aa).

S2 is modified (N-acetylserine). Substrate contacts are provided by H158 and E167. E210 serves as the catalytic Proton donor. D245, E293, and D318 together coordinate Mg(2+). 2 residues coordinate substrate: E293 and D318. Catalysis depends on K343, which acts as the Proton acceptor. Substrate-binding positions include 370–373 (SHRS) and K394.

It belongs to the enolase family. As to quaternary structure, homodimer. Interacts with PNKD. The cofactor is Mg(2+).

The protein localises to the cytoplasm. The catalysed reaction is (2R)-2-phosphoglycerate = phosphoenolpyruvate + H2O. The protein operates within carbohydrate degradation; glycolysis; pyruvate from D-glyceraldehyde 3-phosphate: step 4/5. Its function is as follows. Glycolytic enzyme that catalyzes the conversion of 2-phosphoglycerate to phosphoenolpyruvate. The polypeptide is Beta-enolase (ENO3) (Gallus gallus (Chicken)).